A 949-amino-acid polypeptide reads, in one-letter code: Autophagy-related protein 9 (949 aa).

A disordered region spans residues 1 to 197; the sequence is MMTSNILSRF…GVKWSLGQPN (197 aa). Topologically, residues 1-232 are cytoplasmic; it reads MMTSNILSRF…EVYSYFLGNG (232 aa). Composition is skewed to basic and acidic residues over residues 35 to 57, 75 to 85, and 129 to 139; these read VEER…HELQ, FLARESHHRVP, and EGHHDDEDLKS. A helical membrane pass occupies residues 233 to 253; sequence IWSILLTRVLSLLTFAFVVGF. Residues 254 to 289 are Lumenal-facing; it reads STFLTNCVNYHKVRGSKTLDDILVDRCTTKMSLSST. Residues 290–310 form a helical membrane-spanning segment; the sequence is FLLWLLTFFWIGKAFQCLLGI. Residues 311-431 are Cytoplasmic-facing; it reads RRLKHMHDFY…NLCIMDYVFN (121 aa). The stretch at 432 to 477 is an intramembrane region; that stretch reads EQGQVRTLFLKDTHRKALSEGLRRRFIFAGFMNIFVAPFIVVYFMM. Over 478 to 542 the chain is Cytoplasmic; that stretch reads HYFFRYFNEY…DQFPKDKTVQ (65 aa). A helical membrane pass occupies residues 543 to 563; that stretch reads VAGFVAFVSGALASVLALASV. At 564–578 the chain is on the lumenal side; sequence VDPELFLGFEITHDR. Residues 579 to 599 traverse the membrane as a helical segment; it reads TVLFYLGVFGSVWAVARGMVP. Residues 600–645 are Cytoplasmic-facing; that stretch reads EETNVFDPEYALLEVINYTHYFPSQWKGRLHSDEVRREFAELYQMK. Residues 646–666 lie within the membrane without spanning it; the sequence is IVIFLEEILSMIFTPFILWFS. The Cytoplasmic segment spans residues 667–949; that stretch reads LPRCSDRLID…DGRGRTAVGL (283 aa). Residues 748–919 form a disordered region; the sequence is GAHPSTKRQF…DAGAGGENAD (172 aa).

This sequence belongs to the ATG9 family. Homotrimer; forms a homotrimer with a central pore that forms a path between the two membrane leaflets. In terms of processing, phosphorylated by atg1. Atg1 phosphorylation is required for preautophagosome elongation.

The protein localises to the preautophagosomal structure membrane. It localises to the cytoplasmic vesicle membrane. Its subcellular location is the golgi apparatus membrane. It is found in the endoplasmic reticulum membrane. It carries out the reaction a 1,2-diacyl-sn-glycero-3-phosphocholine(in) = a 1,2-diacyl-sn-glycero-3-phosphocholine(out). It catalyses the reaction a 1,2-diacyl-sn-glycero-3-phospho-L-serine(in) = a 1,2-diacyl-sn-glycero-3-phospho-L-serine(out). The catalysed reaction is a 1,2-diacyl-sn-glycero-3-phosphoethanolamine(in) = a 1,2-diacyl-sn-glycero-3-phosphoethanolamine(out). The enzyme catalyses a 1,2-diacyl-sn-glycero-3-phospho-(1D-myo-inositol-3-phosphate)(in) = a 1,2-diacyl-sn-glycero-3-phospho-(1D-myo-inositol-3-phosphate)(out). In terms of biological role, phospholipid scramblase involved in autophagy and cytoplasm to vacuole transport (Cvt) vesicle formation. Cycles between the preautophagosomal structure/phagophore assembly site (PAS) and the cytoplasmic vesicle pool and supplies membrane for the growing autophagosome. Lipid scramblase activity plays a key role in preautophagosomal structure/phagophore assembly by distributing the phospholipids that arrive through atg2 from the cytoplasmic to the luminal leaflet of the bilayer, thereby driving autophagosomal membrane expansion. Required for mitophagy. Also involved in endoplasmic reticulum-specific autophagic process and is essential for the survival of cells subjected to severe ER stress. Different machineries are required for anterograde trafficking to the PAS during either the Cvt pathway or bulk autophagy and for retrograde trafficking. In Aspergillus clavatus (strain ATCC 1007 / CBS 513.65 / DSM 816 / NCTC 3887 / NRRL 1 / QM 1276 / 107), this protein is Autophagy-related protein 9 (atg9).